A 47-amino-acid chain; its full sequence is Delta-actitoxin-Axm1e (47 aa).

Intrachain disulfides connect Cys-4–Cys-44, Cys-6–Cys-34, and Cys-27–Cys-45.

This sequence belongs to the sea anemone sodium channel inhibitory toxin family. Type I subfamily.

It localises to the secreted. It is found in the nematocyst. Functionally, binds specifically to voltage-gated sodium channels (Nav), thereby delaying their inactivation. This toxin is active on a variety of voltage-gated sodium channels (Nav1.1/SCN1A, Nav1.2/SCN2A, Nav1.3/SCN3A, Nav1.4/SCN4A, Nav1.5/SCN5A and Nav1.6/SCN8A). In Anthopleura xanthogrammica (Giant green sea anemone), this protein is Delta-actitoxin-Axm1e.